Here is a 374-residue protein sequence, read N- to C-terminus: uncharacterized protein (374 aa).

Positions 39-66 (RDVRKHLESRDAKQELIDSLEEAVRDSR) form a coiled coil.

This is an uncharacterized protein from Mycobacterium tuberculosis (strain CDC 1551 / Oshkosh).